Here is a 412-residue protein sequence, read N- to C-terminus: Putative phosphate permease PF1020 (412 aa).

10 helical membrane-spanning segments follow: residues 7-27, 50-70, 88-108, 119-139, 143-163, 187-207, 213-233, 298-318, 335-355, and 384-404; these read MLAD…AWAI, AVII…KTVT, VLIF…VIAT, SIIG…IVNW, IKVV…AYLV, FWIG…VLHG, GFLK…SLIL, WILA…GYKV, FTID…GMPI, and DIII…GIIF.

This sequence belongs to the inorganic phosphate transporter (PiT) (TC 2.A.20) family.

It is found in the cell membrane. Functionally, potential transporter for phosphate. This is Putative phosphate permease PF1020 from Pyrococcus furiosus (strain ATCC 43587 / DSM 3638 / JCM 8422 / Vc1).